The chain runs to 342 residues: UDP-N-acetylglucosamine--N-acetylmuramyl-(pentapeptide) pyrophosphoryl-undecaprenol N-acetylglucosamine transferase (342 aa).

Residues 10–12 (TGG), asparagine 124, serine 177, and glutamine 275 each bind UDP-N-acetyl-alpha-D-glucosamine.

This sequence belongs to the glycosyltransferase 28 family. MurG subfamily.

It is found in the cell inner membrane. The catalysed reaction is di-trans,octa-cis-undecaprenyl diphospho-N-acetyl-alpha-D-muramoyl-L-alanyl-D-glutamyl-meso-2,6-diaminopimeloyl-D-alanyl-D-alanine + UDP-N-acetyl-alpha-D-glucosamine = di-trans,octa-cis-undecaprenyl diphospho-[N-acetyl-alpha-D-glucosaminyl-(1-&gt;4)]-N-acetyl-alpha-D-muramoyl-L-alanyl-D-glutamyl-meso-2,6-diaminopimeloyl-D-alanyl-D-alanine + UDP + H(+). It functions in the pathway cell wall biogenesis; peptidoglycan biosynthesis. Its function is as follows. Cell wall formation. Catalyzes the transfer of a GlcNAc subunit on undecaprenyl-pyrophosphoryl-MurNAc-pentapeptide (lipid intermediate I) to form undecaprenyl-pyrophosphoryl-MurNAc-(pentapeptide)GlcNAc (lipid intermediate II). This Campylobacter jejuni subsp. jejuni serotype O:2 (strain ATCC 700819 / NCTC 11168) protein is UDP-N-acetylglucosamine--N-acetylmuramyl-(pentapeptide) pyrophosphoryl-undecaprenol N-acetylglucosamine transferase.